Here is a 122-residue protein sequence, read N- to C-terminus: UPF0102 protein BQ09720 (122 aa).

Belongs to the UPF0102 family.

This is UPF0102 protein BQ09720 from Bartonella quintana (strain Toulouse) (Rochalimaea quintana).